Reading from the N-terminus, the 232-residue chain is Putative homeobox protein NANOG2 (232 aa).

Residues 1 to 10 (MDLPIEDSHD) show a composition bias toward basic and acidic residues. The disordered stretch occupies residues 1 to 39 (MDLPIEDSHDSSTSPKGKQPTTAEKSATKKEDKVPVKKQ). Polar residues predominate over residues 11-25 (SSTSPKGKQPTTAEK). The span at 26–35 (SATKKEDKVP) shows a compositional bias: basic and acidic residues. Repeat copies occupy residues 123–127 (WSNQT), 128–132 (WNNSI), 133–137 (WSNET), 143–147 (WSNHS), 148–152 (WNTQT), 153–157 (WCTQS), 158–162 (WNNQA), and 163–167 (WNSPF). The tract at residues 123 to 167 (WSNQTWNNSIWSNETQNIQSWSNHSWNTQTWCTQSWNNQAWNSPF) is 8 X repeats starting with a Trp in each unit. Residues 123–167 (WSNQTWNNSIWSNETQNIQSWSNHSWNTQTWCTQSWNNQAWNSPF) form a sufficient for transactivation activity region. The tract at residues 168–232 (YNCGEESLQS…YSTNMQPEDV (65 aa)) is sufficient for strong transactivation activity.

It belongs to the Nanog homeobox family.

It is found in the nucleus. Functionally, probable transcriptional regulator. In Pan troglodytes (Chimpanzee), this protein is Putative homeobox protein NANOG2 (NANOGP1).